The sequence spans 221 residues: HP1-HOAP-interacting protein (221 aa).

The tract at residues 69-113 (NAKRHKMARETAASITDVSGSQSSSHQSAPSLHVSGQSSEFGASY) is disordered. Low complexity predominate over residues 86-103 (VSGSQSSSHQSAPSLHVS).

In terms of assembly, component of the HipHop-HOAP telomere-capping complex, composed of at least HipHop and cav/HOAP, and may include Su(var)205/HP1; HipHop and cav/HOAP, but not Su(var)205, are interdependent for their protein stability. Interacts (via N-terminus) with cav/HOAP and Su(var)205/HP1. The HipHop-HOAP complex recruits the MTV complex, consisting of moi/modigliani, tea and ver/verrocchio, to telomeres to form the terminin telomere-capping complex.

Its subcellular location is the nucleus. It is found in the chromosome. It localises to the telomere. Its function is as follows. Part of the HipHop-HOAP complex that recruits the MTV complex to form the terminin telomere-capping complex, which binds to chromosome ends in a sequence-independent manner and prevents telomere fusion. The chain is HP1-HOAP-interacting protein from Drosophila melanogaster (Fruit fly).